The chain runs to 252 residues: Probable transcriptional regulatory protein Moth_1704 (252 aa).

This sequence belongs to the TACO1 family.

It is found in the cytoplasm. The protein is Probable transcriptional regulatory protein Moth_1704 of Moorella thermoacetica (strain ATCC 39073 / JCM 9320).